The primary structure comprises 922 residues: Disintegrin and metalloproteinase domain-containing protein 10 homolog (922 aa).

Positions 1–26 (MSSPIRNRLQLVVTLIFCLFFENVNG) are cleaved as a signal peptide. A propeptide spanning residues 27–228 (LNNFIDNFET…YMTMGGRSKR (202 aa)) is cleaved from the precursor. N-linked (GlcNAc...) asparagine glycosylation is found at Asn74, Asn185, and Asn346. Residues 229 to 745 (ANTLRDHDGL…ETLTQWAQDN (517 aa)) are Extracellular-facing. In terms of domain architecture, Peptidase M12B spans 242 to 480 (RTCSLYMQAD…CSVKNISAVL (239 aa)). Position 426 (His426) interacts with Zn(2+). Glu427 is a catalytic residue. Zn(2+) contacts are provided by His430 and His436. Residues Cys442 and Cys471 are joined by a disulfide bond. Asn475 carries N-linked (GlcNAc...) asparagine glycosylation. A Disintegrin domain is found at 511–615 (SAFCGNQIYE…QCPVSPPKHD (105 aa)). 5 disulfide bridges follow: Cys542–Cys577, Cys564–Cys572, Cys588–Cys607, Cys594–Cys626, and Cys619–Cys631. N-linked (GlcNAc...) asparagine glycosylation is present at Asn632. Intrachain disulfides connect Cys636–Cys659, Cys644–Cys665, Cys655–Cys707, and Cys700–Cys713. Asn677 carries an N-linked (GlcNAc...) asparagine glycan. A helical transmembrane segment spans residues 746 to 766 (WWVVGVGGLVFLVIMALFVKC). The Cytoplasmic segment spans residues 767 to 922 (CAVHTPSTNP…SGNGGKKKGK (156 aa)). 2 disordered regions span residues 797 to 837 (QHRQ…PSAP) and 864 to 922 (PGSS…KKGK). Low complexity predominate over residues 805–834 (AAGSVPPGPGAQPRSGAASAPSRTTPSARP).

As to quaternary structure, may interact with tetraspanin tsp-12; the interaction promotes sup-17 cell membrane localization. Zn(2+) serves as cofactor. In terms of tissue distribution, expressed in the germline.

It localises to the cell membrane. The protein localises to the basolateral cell membrane. It is found in the cytoplasmic vesicle membrane. The catalysed reaction is Endopeptidase of broad specificity.. Functionally, metalloprotease. Acts together with protease adm-4 and in a cell autonomous manner to facilitate lin-12/Notch signaling during developmental cell fate decision, including anchor cell/ventral uterine precursor cell decision and vulva precursor cell specification. By modulating glp-1/Notch signaling, plays a role in germline development. Probably by modulating BMP-like Sma/Mab signaling via the shedding of unc-40 ectodomain, involved in the regulation of body size and mesoderm development. Probably by shedding ephrin efn-4, regulates axon guidance of SDQL neuron during development. This is Disintegrin and metalloproteinase domain-containing protein 10 homolog from Caenorhabditis elegans.